The sequence spans 200 residues: Probable GTP-binding protein EngB (200 aa).

The 178-residue stretch at 22–199 (GLDEIALAGR…KDWIQARLYE (178 aa)) folds into the EngB-type G domain. GTP is bound by residues 30–37 (GRSNVGKS), 57–61 (GKTQT), 78–81 (DVPG), 145–148 (TKMD), and 178–180 (FSS). Residues Ser-37 and Thr-59 each coordinate Mg(2+).

Belongs to the TRAFAC class TrmE-Era-EngA-EngB-Septin-like GTPase superfamily. EngB GTPase family. Mg(2+) serves as cofactor.

Its function is as follows. Necessary for normal cell division and for the maintenance of normal septation. In Lactobacillus delbrueckii subsp. bulgaricus (strain ATCC 11842 / DSM 20081 / BCRC 10696 / JCM 1002 / NBRC 13953 / NCIMB 11778 / NCTC 12712 / WDCM 00102 / Lb 14), this protein is Probable GTP-binding protein EngB.